The chain runs to 276 residues: MAVVTMRELLDAGVHFGHQTRRWNPKMRRFIFTERNGIYIIDLQQTLTYIDQAFEFVKETVAHGGTILFVGTKKQAQEAVQVEAERVGMPYVNHRWLGGMLTNFQTVSKRLHRMKELQAMDAAEDGYEGRTKRETLMLTRERVKLERVLSGIADMSRIPSALWIIDTNKEHIAVAEAHKLNIPVVAILDTNCDPDVVDYPVPGNDDAIRATALLSRVISTAVEEGKKAREERQLAAAREAAGEPKSEDAPAEAAATEEAPATEAPAAEAQQENAAE.

Residues 226–276 (KKAREERQLAAAREAAGEPKSEDAPAEAAATEEAPATEAPAAEAQQENAAE) are disordered. Over residues 251 to 276 (AEAAATEEAPATEAPAAEAQQENAAE) the composition is skewed to low complexity.

This sequence belongs to the universal ribosomal protein uS2 family.

The sequence is that of Small ribosomal subunit protein uS2 from Corynebacterium efficiens (strain DSM 44549 / YS-314 / AJ 12310 / JCM 11189 / NBRC 100395).